A 130-amino-acid polypeptide reads, in one-letter code: Methylglyoxal synthase (130 aa).

Positions 1–130 (MSTPRIALIA…DLARRLTANA (130 aa)) constitute an MGS-like domain. Residues His-11, Lys-15, 37 to 40 (TGTT), and 57 to 58 (SG) each bind substrate. Asp-63 (proton donor/acceptor) is an active-site residue. A substrate-binding site is contributed by His-90.

It belongs to the methylglyoxal synthase family.

It carries out the reaction dihydroxyacetone phosphate = methylglyoxal + phosphate. In terms of biological role, catalyzes the formation of methylglyoxal from dihydroxyacetone phosphate. The polypeptide is Methylglyoxal synthase (Burkholderia mallei (strain NCTC 10247)).